The chain runs to 315 residues: Homoserine kinase (315 aa).

97–107 serves as a coordination point for ATP; the sequence is PPARGLGSSAT.

The protein belongs to the GHMP kinase family. Homoserine kinase subfamily.

Its subcellular location is the cytoplasm. It carries out the reaction L-homoserine + ATP = O-phospho-L-homoserine + ADP + H(+). It participates in amino-acid biosynthesis; L-threonine biosynthesis; L-threonine from L-aspartate: step 4/5. Its function is as follows. Catalyzes the ATP-dependent phosphorylation of L-homoserine to L-homoserine phosphate. The chain is Homoserine kinase from Synechococcus sp. (strain WH7803).